A 245-amino-acid polypeptide reads, in one-letter code: MFSLKMRASKDGVHVSGAERISTENKIEEIANSLIKRALFHENGTPDTINLKLEKITSEITYLKHIPIKTLISNNKETSRNISRNILRKELEVYFLKNGKDFGKIDILIDTAFEIIDKGNMRGAAVLDLDGNRLEEDTEKGVRVKNIDTSEELKSKILADSKLTDRTIDAIAIATKVLNFGFIAEICTSDNYSYNIGYVATKSGYFRIPNLKNEGEFGGRVFFIENSANIEEIFEKIEKTPVIVY.

The protein belongs to the BioW family. As to quaternary structure, homodimer. The cofactor is Mg(2+).

It catalyses the reaction heptanedioate + ATP + CoA = 6-carboxyhexanoyl-CoA + AMP + diphosphate. It functions in the pathway metabolic intermediate metabolism; pimeloyl-CoA biosynthesis; pimeloyl-CoA from pimelate: step 1/1. Functionally, catalyzes the transformation of pimelate into pimeloyl-CoA with concomitant hydrolysis of ATP to AMP. The chain is 6-carboxyhexanoate--CoA ligase from Methanococcus vannielii (strain ATCC 35089 / DSM 1224 / JCM 13029 / OCM 148 / SB).